The primary structure comprises 76 residues: Conotoxin Gla(1)-TxVI (76 aa).

A signal peptide spans 1–19; that stretch reads MEKLTILLLVAAVLMSTQA. A propeptide spanning residues 20 to 45 is cleaved from the precursor; the sequence is LVERAGENHSKENINFLLKRKRAADR. W48 carries the 6'-bromotryptophan modification. At E50 the chain carries 4-carboxyglutamate. 3 cysteine pairs are disulfide-bonded: C51–C65, C58–C69, and C64–C73. Residue P61 is modified to 4-hydroxyproline. E63, E67, and E70 each carry 4-carboxyglutamate. W76 carries the 6'-bromotryptophan modification.

In terms of tissue distribution, expressed by the venom duct.

The protein localises to the secreted. This chain is Conotoxin Gla(1)-TxVI, found in Conus textile (Cloth-of-gold cone).